The primary structure comprises 377 residues: Lactosylceramide 1,3-N-acetyl-beta-D-glucosaminyltransferase A (377 aa).

Residues 1-12 (MLISARRLRRCQ) lie on the Cytoplasmic side of the membrane. Residues 13–30 (FLQLLASCFVLSLMALLV) traverse the membrane as a helical; Signal-anchor for type II membrane protein segment. The Lumenal portion of the chain corresponds to 31 to 377 (QEDNSLISHV…DTYPCSAAWS (347 aa)). Asn56, Asn167, and Asn275 each carry an N-linked (GlcNAc...) asparagine glycan.

It belongs to the glycosyltransferase 31 family.

The protein localises to the golgi apparatus membrane. It catalyses the reaction a beta-D-Gal-(1-&gt;4)-beta-D-Glc-(1&lt;-&gt;1)-Cer(d18:1(4E)) + UDP-N-acetyl-alpha-D-glucosamine = a beta-D-GlcNAc-(1-&gt;3)-beta-D-Gal-(1-&gt;4)-beta-D-Glc-(1&lt;-&gt;1)-Cer(d18:1(4E)) + UDP + H(+). It carries out the reaction a neolactoside nLc4Cer(d18:1(4E)) + UDP-N-acetyl-alpha-D-glucosamine = a neolactoside IV(3)-beta-GlcNAc-nLc4Cer(d18:1(4E)) + UDP + H(+). It participates in protein modification; protein glycosylation. In terms of biological role, beta-1,3-N-acetylglucosaminyltransferase that plays a key role in the synthesis of lacto- or neolacto-series carbohydrate chains on glycolipids. In Xenopus laevis (African clawed frog), this protein is Lactosylceramide 1,3-N-acetyl-beta-D-glucosaminyltransferase A (b3gnt5-a).